We begin with the raw amino-acid sequence, 775 residues long: 5-methyltetrahydropteroyltriglutamate--homocysteine methyltransferase (775 aa).

Residues 16 to 19 (REMK) and Lys-115 each bind 5-methyltetrahydropteroyltri-L-glutamate. L-homocysteine-binding positions include 435–437 (IGS) and Glu-488. Residues 435–437 (IGS) and Glu-488 each bind L-methionine. Residues 519-520 (RC) and Trp-565 each bind 5-methyltetrahydropteroyltri-L-glutamate. Asp-603 provides a ligand contact to L-homocysteine. Asp-603 contributes to the L-methionine binding site. Glu-609 lines the 5-methyltetrahydropteroyltri-L-glutamate pocket. Positions 645, 647, and 669 each coordinate Zn(2+). His-698 acts as the Proton donor in catalysis. Cys-730 contributes to the Zn(2+) binding site.

The protein belongs to the vitamin-B12 independent methionine synthase family. Zn(2+) is required as a cofactor.

The enzyme catalyses 5-methyltetrahydropteroyltri-L-glutamate + L-homocysteine = tetrahydropteroyltri-L-glutamate + L-methionine. It participates in amino-acid biosynthesis; L-methionine biosynthesis via de novo pathway; L-methionine from L-homocysteine (MetE route): step 1/1. Its function is as follows. Catalyzes the transfer of a methyl group from 5-methyltetrahydrofolate to homocysteine resulting in methionine formation. The sequence is that of 5-methyltetrahydropteroyltriglutamate--homocysteine methyltransferase from Coxiella burnetii (strain Dugway 5J108-111).